A 210-amino-acid polypeptide reads, in one-letter code: Meiotic coiled-coil protein 7 (210 aa).

Residues Lys-77–His-148 are a coiled coil.

Belongs to the MND1 family. As to quaternary structure, interacts with meu13.

Its subcellular location is the cytoplasm. The protein localises to the nucleus. Its function is as follows. Required for meiotic recombination. This chain is Meiotic coiled-coil protein 7 (mcp7), found in Schizosaccharomyces pombe (strain 972 / ATCC 24843) (Fission yeast).